Reading from the N-terminus, the 357-residue chain is Sulfate/thiosulfate import ATP-binding protein CysA (357 aa).

One can recognise an ABC transporter domain in the interval 3-237 (ITIQNLNKHF…PENAFVTEFL (235 aa)). Residue 35–42 (GPSGCGKT) coordinates ATP.

This sequence belongs to the ABC transporter superfamily. Sulfate/tungstate importer (TC 3.A.1.6) family. In terms of assembly, the complex is composed of two ATP-binding proteins (CysA), two transmembrane proteins (CysT and CysW) and a solute-binding protein (CysP).

It is found in the cell inner membrane. It carries out the reaction sulfate(out) + ATP + H2O = sulfate(in) + ADP + phosphate + H(+). It catalyses the reaction thiosulfate(out) + ATP + H2O = thiosulfate(in) + ADP + phosphate + H(+). Part of the ABC transporter complex CysAWTP involved in sulfate/thiosulfate import. Responsible for energy coupling to the transport system. This chain is Sulfate/thiosulfate import ATP-binding protein CysA, found in Neisseria meningitidis serogroup B (strain ATCC BAA-335 / MC58).